The primary structure comprises 427 residues: MELNIKMDRSKELFEESKKYLVGGVNSPVRLFKPFPFFVKSAKDCFLYDEDGNEFIDYCLAYGPMVLGHANENILNAVKSQMDLGTAYGVPSEKEITLAKEVINRIPCAEMVRFVNSGTEATMGAIRLARGVTKRNKIIKFEGAFHGAHDYVLVKTGSGALTHGAPNSPGIPEDTTKNTLLIPFNDEEAVRKVISENKEEIACIILEPVMGNVGCIPPKDGYLQFLREITEENGILLIFDEVITGFRLSKGGAQEYYGIKSDLATVGKILGGGFPIGAITGKKEYMEQFSPNGQIYQAGTFNGNPISVTAGIETLKNLDDKFYKETTKKAGILSNCLRETAEKYNIPAKVYNVASIFQVYFNDKEIVTYEDAKSSDTEKFMKYFYTLLENGVFVAPSQFECCFTSIKHNDEVLEKTMNAIDIAMKKL.

Lysine 268 bears the N6-(pyridoxal phosphate)lysine mark.

This sequence belongs to the class-III pyridoxal-phosphate-dependent aminotransferase family. HemL subfamily. Pyridoxal 5'-phosphate is required as a cofactor.

It localises to the cytoplasm. The enzyme catalyses (S)-4-amino-5-oxopentanoate = 5-aminolevulinate. It functions in the pathway porphyrin-containing compound metabolism; protoporphyrin-IX biosynthesis; 5-aminolevulinate from L-glutamyl-tRNA(Glu): step 2/2. The polypeptide is Glutamate-1-semialdehyde 2,1-aminomutase (Methanococcus maripaludis (strain DSM 14266 / JCM 13030 / NBRC 101832 / S2 / LL)).